A 357-amino-acid polypeptide reads, in one-letter code: Glucose-6-phosphatase catalytic subunit 1 (357 aa).

Over 1-28 the chain is Lumenal; the sequence is MEERMNVLHDFGIQSTRYLQVNYEDSQD. Residues 29–49 traverse the membrane as a helical segment; the sequence is WFVLVSVIADLRNAFYVLFPI. Residues 50 to 60 lie on the Cytoplasmic side of the membrane; it reads WFHIQETVGIN. A helical membrane pass occupies residues 61–81; it reads LLWVAVVGDWFNLVFKWILFG. Residues 82 to 117 lie on the Lumenal side of the membrane; that stretch reads QRPYWWVLDTDYYSNSSVPLIKQFPVTCETGPGSPS. Substrate is bound at residue Arg-83. A glycan (N-linked (GlcNAc...) asparagine) is linked at Asn-96. Residues 118–138 form a helical membrane-spanning segment; the sequence is GHAMGTAGVYYVMVTSTLAIF. Catalysis depends on His-119, which acts as the Proton donor. The Cytoplasmic portion of the chain corresponds to 139-147; it reads RGKKKSTYG. The chain crosses the membrane as a helical span at residues 148–168; the sequence is FRCLNVVLWLGYWAVQLNVCL. Topologically, residues 169 to 170 are lumenal; the sequence is SR. Arg-170 lines the substrate pocket. A helical transmembrane segment spans residues 171–191; sequence IYLAAHFPHQVVAGVLSGIAV. The active-site Nucleophile is His-176. Over 192–211 the chain is Cytoplasmic; the sequence is AETFSHIRGIYNASLQRYCL. The helical transmembrane segment at 212-232 threads the bilayer; sequence ITFFLFGFALGFYLLLKGLGV. Residues 233-254 lie on the Lumenal side of the membrane; it reads DLLWTLEKAKRWCERPEWVHLD. The helical transmembrane segment at 255–275 threads the bilayer; sequence TTPFASLFKNLGTLLGLGLAL. Over 276–291 the chain is Cytoplasmic; it reads NSSMYRKSCKGELRKS. The helical transmembrane segment at 292–312 threads the bilayer; it reads LPFRLACIVASLGLLHLFDSL. Residues 313 to 320 lie on the Lumenal side of the membrane; the sequence is KPPSQIES. A helical membrane pass occupies residues 321-341; that stretch reads IFYILSFCKSATVPFASVSLI. Residues 342-357 lie on the Cytoplasmic side of the membrane; it reads PYCLARLLGQTHKKSL. The Prevents secretion from ER motif lies at 354-357; sequence KKSL.

Belongs to the glucose-6-phosphatase family.

The protein resides in the endoplasmic reticulum membrane. It catalyses the reaction D-glucose 6-phosphate + H2O = D-glucose + phosphate. It participates in carbohydrate biosynthesis; gluconeogenesis. Hydrolyzes glucose-6-phosphate to glucose in the endoplasmic reticulum. Forms with the glucose-6-phosphate transporter (SLC37A4/G6PT) the complex responsible for glucose production in the terminal step of glycogenolysis and gluconeogenesis. Hence, it is the key enzyme in homeostatic regulation of blood glucose levels. This is Glucose-6-phosphatase catalytic subunit 1 (G6pc1) from Rattus norvegicus (Rat).